We begin with the raw amino-acid sequence, 618 residues long: Camphene synthase, chloroplastic (618 aa).

A chloroplast-targeting transit peptide spans 1-51; sequence MALLSITPLVSRSCLSSSHEIKALRRTIPTLGICRPGKSVAHSINMCLTSV. 3 residues coordinate Mg(2+): Asp369, Asp373, and Asp521. A DDXXD motif motif is present at residues 369-373; it reads DDMYD.

The protein belongs to the terpene synthase family. Tpsd subfamily. The cofactor is Mg(2+). It depends on Mn(2+) as a cofactor. Requires K(+) as cofactor.

It localises to the plastid. Its subcellular location is the chloroplast. It carries out the reaction (2E)-geranyl diphosphate = (1S,4R)-camphene + diphosphate. Its pathway is terpene metabolism; oleoresin biosynthesis. Its function is as follows. Involved in defensive oleoresin formation in conifers in response to insect attack or other injury. Involved in monoterpene (C10) olefins biosynthesis. In Abies grandis (Grand fir), this protein is Camphene synthase, chloroplastic (ag6).